The chain runs to 26 residues: Oxyopinin-3b (26 aa).

Expressed by the venom gland.

The protein resides in the secreted. Its function is as follows. May have cytolytic and antimicrobial activity. In Oxyopes takobius (Lynx spider), this protein is Oxyopinin-3b.